Reading from the N-terminus, the 364-residue chain is Probable dual-specificity RNA methyltransferase RlmN (364 aa).

Glu107 functions as the Proton acceptor in the catalytic mechanism. A Radical SAM core domain is found at His113–Asp346. Cys120 and Cys351 are joined by a disulfide. Residues Cys127, Cys131, and Cys134 each coordinate [4Fe-4S] cluster. Residues Gly177–Glu178, Ser209, Ser232–His234, and Asn308 each bind S-adenosyl-L-methionine. The active-site S-methylcysteine intermediate is Cys351.

It belongs to the radical SAM superfamily. RlmN family. [4Fe-4S] cluster serves as cofactor.

Its subcellular location is the cytoplasm. The catalysed reaction is adenosine(2503) in 23S rRNA + 2 reduced [2Fe-2S]-[ferredoxin] + 2 S-adenosyl-L-methionine = 2-methyladenosine(2503) in 23S rRNA + 5'-deoxyadenosine + L-methionine + 2 oxidized [2Fe-2S]-[ferredoxin] + S-adenosyl-L-homocysteine. It carries out the reaction adenosine(37) in tRNA + 2 reduced [2Fe-2S]-[ferredoxin] + 2 S-adenosyl-L-methionine = 2-methyladenosine(37) in tRNA + 5'-deoxyadenosine + L-methionine + 2 oxidized [2Fe-2S]-[ferredoxin] + S-adenosyl-L-homocysteine. In terms of biological role, specifically methylates position 2 of adenine 2503 in 23S rRNA and position 2 of adenine 37 in tRNAs. Confers resistance to some classes of antibiotics. The chain is Probable dual-specificity RNA methyltransferase RlmN from Staphylococcus saprophyticus subsp. saprophyticus (strain ATCC 15305 / DSM 20229 / NCIMB 8711 / NCTC 7292 / S-41).